The sequence spans 121 residues: NADH-quinone oxidoreductase subunit A 1 (121 aa).

3 helical membrane passes run 6-26, 62-82, and 90-110; these read FPIF…LSIG, LVAM…PWAV, and FYGL…YYYI.

It belongs to the complex I subunit 3 family. In terms of assembly, NDH-1 is composed of 14 different subunits. Subunits NuoA, H, J, K, L, M, N constitute the membrane sector of the complex.

The protein localises to the cell inner membrane. It carries out the reaction a quinone + NADH + 5 H(+)(in) = a quinol + NAD(+) + 4 H(+)(out). Functionally, NDH-1 shuttles electrons from NADH, via FMN and iron-sulfur (Fe-S) centers, to quinones in the respiratory chain. The immediate electron acceptor for the enzyme in this species is believed to be a menaquinone. Couples the redox reaction to proton translocation (for every two electrons transferred, four hydrogen ions are translocated across the cytoplasmic membrane), and thus conserves the redox energy in a proton gradient. This chain is NADH-quinone oxidoreductase subunit A 1, found in Chloroherpeton thalassium (strain ATCC 35110 / GB-78).